A 581-amino-acid polypeptide reads, in one-letter code: FAD-linked oxidoreductase easE (581 aa).

Residues 1–25 (MYRLLGPLACLALAWFFTWAPSGRC) form the signal peptide. 2 N-linked (GlcNAc...) asparagine glycosylation sites follow: Asn-44 and Asn-73. Residues 122-306 (HQGRIPLYSA…AQATIRVFPD (185 aa)) form the FAD-binding PCMH-type domain. The N-linked (GlcNAc...) asparagine glycan is linked to Asn-369.

Belongs to the oxygen-dependent FAD-linked oxidoreductase family. FAD is required as a cofactor.

The protein operates within alkaloid biosynthesis; ergot alkaloid biosynthesis. Functionally, FAD-linked oxidoreductase; part of the gene cluster that mediates the biosynthesis of fungal ergot alkaloid. DmaW catalyzes the first step of ergot alkaloid biosynthesis by condensing dimethylallyl diphosphate (DMAP) and tryptophan to form 4-dimethylallyl-L-tryptophan. The second step is catalyzed by the methyltransferase easF that methylates 4-dimethylallyl-L-tryptophan in the presence of S-adenosyl-L-methionine, resulting in the formation of 4-dimethylallyl-L-abrine. The catalase easC and the FAD-dependent oxidoreductase easE then transform 4-dimethylallyl-L-abrine to chanoclavine-I which is further oxidized by easD in the presence of NAD(+), resulting in the formation of chanoclavine-I aldehyde. Agroclavine dehydrogenase easG then mediates the conversion of chanoclavine-I aldehyde to agroclavine via a non-enzymatic adduct reaction: the substrate is an iminium intermediate that is formed spontaneously from chanoclavine-I aldehyde in the presence of glutathione. Further conversion of agroclavine to paspalic acid is a two-step process involving oxidation of agroclavine to elymoclavine and of elymoclavine to paspalic acid, the second step being performed by the elymoclavine oxidase cloA. However, cloA does not encode a functional enzyme indicating that C.fusiformis terminates its ergot alkaloid pathway at elymoclavine. In Claviceps fusiformis (Ergot fungus), this protein is FAD-linked oxidoreductase easE.